Reading from the N-terminus, the 126-residue chain is MAILGLGTDIVEIARIEVVIERSGERLARRILTDAEWAHYQQHQQPVRFLAKRFAVKEAAAKAFGTGIRNGLAFNQFEVFNDELGKPCLRFFAKAAELAEQMGVRHVHVTLADERRYACATVIIES.

Positions 9 and 58 each coordinate Mg(2+).

This sequence belongs to the P-Pant transferase superfamily. AcpS family. It depends on Mg(2+) as a cofactor.

It is found in the cytoplasm. It carries out the reaction apo-[ACP] + CoA = holo-[ACP] + adenosine 3',5'-bisphosphate + H(+). In terms of biological role, transfers the 4'-phosphopantetheine moiety from coenzyme A to a Ser of acyl-carrier-protein. This Pectobacterium atrosepticum (strain SCRI 1043 / ATCC BAA-672) (Erwinia carotovora subsp. atroseptica) protein is Holo-[acyl-carrier-protein] synthase.